A 304-amino-acid polypeptide reads, in one-letter code: N-acetylmuramic acid 6-phosphate etherase (304 aa).

The SIS domain occupies 60-221 (GVSVLRHGGR…STAVMVRLGY (162 aa)). The active-site Proton donor is Glu-88. The active site involves Glu-119.

This sequence belongs to the GCKR-like family. MurNAc-6-P etherase subfamily. In terms of assembly, homodimer.

The enzyme catalyses N-acetyl-D-muramate 6-phosphate + H2O = N-acetyl-D-glucosamine 6-phosphate + (R)-lactate. It participates in amino-sugar metabolism; N-acetylmuramate degradation. Specifically catalyzes the cleavage of the D-lactyl ether substituent of MurNAc 6-phosphate, producing GlcNAc 6-phosphate and D-lactate. In Thermobifida fusca (strain YX), this protein is N-acetylmuramic acid 6-phosphate etherase.